Here is a 330-residue protein sequence, read N- to C-terminus: Ferredoxin--NADP reductase (330 aa).

FAD contacts are provided by Glu-35, Gln-43, Tyr-48, Val-90, Phe-123, Asp-285, and Thr-326.

This sequence belongs to the ferredoxin--NADP reductase type 2 family. In terms of assembly, homodimer. The cofactor is FAD.

It catalyses the reaction 2 reduced [2Fe-2S]-[ferredoxin] + NADP(+) + H(+) = 2 oxidized [2Fe-2S]-[ferredoxin] + NADPH. The protein is Ferredoxin--NADP reductase of Streptococcus pyogenes serotype M1.